The sequence spans 441 residues: Tubulin beta-1 chain (441 aa).

Gln11, Glu69, Ser138, Gly142, Thr143, Gly144, Asn204, and Asn226 together coordinate GTP. Glu69 contacts Mg(2+).

This sequence belongs to the tubulin family. In terms of assembly, dimer of alpha and beta chains. A typical microtubule is a hollow water-filled tube with an outer diameter of 25 nm and an inner diameter of 15 nM. Alpha-beta heterodimers associate head-to-tail to form protofilaments running lengthwise along the microtubule wall with the beta-tubulin subunit facing the microtubule plus end conferring a structural polarity. Microtubules usually have 13 protofilaments but different protofilament numbers can be found in some organisms and specialized cells. Mg(2+) is required as a cofactor. As to expression, expressed primarily in touch receptor neurons.

It localises to the cytoplasm. The protein resides in the cytoskeleton. Its function is as follows. Tubulin is the major constituent of microtubules, a cylinder consisting of laterally associated linear protofilaments composed of alpha- and beta-tubulin heterodimers. Microtubules grow by the addition of GTP-tubulin dimers to the microtubule end, where a stabilizing cap forms. Below the cap, tubulin dimers are in GDP-bound state, owing to GTPase activity of alpha-tubulin. Plays a role in mechanosensory transduction (touch sensitivity). Functionally, mec-7 beta-tubulin is required for the production of 15-protofilament microtubules. This is Tubulin beta-1 chain (mec-7) from Caenorhabditis briggsae.